Here is a 260-residue protein sequence, read N- to C-terminus: MPGFSSPAIILRRTAYAEYDTILDLLTLERGRITAMAKNARKSKKRFAGILEPFCCLDAVFTDPSARSGMTILKEAAMTAPFGAIRLNMEKVAYASYWSEMVNRWVKEDDTQSALFHLLHYVLFMLDSGKASHADLSILFQVRFMTLAGLFPGMAACRVCKTEIDRLSGSPTLYLDIARGGIVCHRCGGEGAGSQYRKPLSRGLVKQFLWVRETDLPQAERMRFTAAAREQGLAALEAFVTYHLAMEIKSLKVLQRIRHW.

Belongs to the RecO family.

In terms of biological role, involved in DNA repair and RecF pathway recombination. The protein is DNA repair protein RecO of Desulfosudis oleivorans (strain DSM 6200 / JCM 39069 / Hxd3) (Desulfococcus oleovorans).